The sequence spans 604 residues: MHRYRSHTCGALRPSDVGSTVRLSGWCHRVRDHGGVLFIDLRDHYGLTQCVVDADSPAFRAAEAVRSEWVIRIDGRVRQRPAGTENPDLPTGAVEVYIADLEVLGHAVELPMPVFGDLDYPEETRLRYRFLDLRREKLHANIMKRGAIIDSLRRRMREGGFFEFQTPILTASSPEGARDFLVPSRLHPGKFYALPQAPQQFKQLTMIAGFDRYFQIAPCFRDEDARADRSPGEFYQLDIEMSFVTQEDVFQAVEPVLRGVFEEFADGWRVTQSFPRIPYAEAMLKYGVDKPDLRNPLLIVDVTEEFSAEAVTFNAFKNLIRAGGVVRAIPAPGAASQPRSFFDKLNDWARSEGAPGLGYIVFEEEGGQLIGRGPIAKFVPAEVQAAIAGKAGLKAGDAVFFSAGTEAKAAGLAGKARIRIGDDLGLSDKDQFAFCWITDFPMYEWNEDEKRIDFSHNPFSMPNYDHKAFLALDPADADTILGIKAFQYDIVCNGIELSSGAIRNHRPDVMEKAFAIAGYGRDVLEQKFGGMLNALRMGAPPHGGIAPGVDRIVMLLCHEPNIREVVLFPMNQRAEDLMMGAPSEVTAKQLRELHIRLNLPEKSA.

Glu175 contributes to the L-aspartate binding site. Positions 199–202 (QQFK) are aspartate. L-aspartate contacts are provided by Arg221 and His456. Residue 221-223 (RDE) participates in ATP binding. Glu496 serves as a coordination point for ATP. Residue Arg503 participates in L-aspartate binding. 548-551 (GVDR) provides a ligand contact to ATP.

Belongs to the class-II aminoacyl-tRNA synthetase family. Type 1 subfamily. In terms of assembly, homodimer.

The protein localises to the cytoplasm. It catalyses the reaction tRNA(Asx) + L-aspartate + ATP = L-aspartyl-tRNA(Asx) + AMP + diphosphate. Its function is as follows. Aspartyl-tRNA synthetase with relaxed tRNA specificity since it is able to aspartylate not only its cognate tRNA(Asp) but also tRNA(Asn). Reaction proceeds in two steps: L-aspartate is first activated by ATP to form Asp-AMP and then transferred to the acceptor end of tRNA(Asp/Asn). In Methylobacterium nodulans (strain LMG 21967 / CNCM I-2342 / ORS 2060), this protein is Aspartate--tRNA(Asp/Asn) ligase.